The following is a 187-amino-acid chain: MNAMGSDYIREVNVVKSARVGYSKMLLGVYAYFIEHKQRNTLIPAGFVAVFNSDESSWHLVEDHRGKTVYDVASGDALFISELGPLPENVTWLSPEGEFQKWNGTAWVKDAEAEKLFRIREAEETKNSLMQVASEHIAPLQDAVDLEIATEEETSLLEAWKKYRVLLNRVDTSTAPDIEWPTNPVRE.

It in the C-terminal section; belongs to the tfa family.

In Escherichia coli (strain K12), this protein is Protein TfaD (tfaD).